The following is a 431-amino-acid chain: Adenylosuccinate synthetase (431 aa).

GTP contacts are provided by residues 12–18 and 40–42; these read GDEGKGK and GHT. Residue aspartate 13 is the Proton acceptor of the active site. The Mg(2+) site is built by aspartate 13 and glycine 40. Residues 13–16, 38–41, threonine 130, arginine 144, glutamine 225, threonine 240, and arginine 304 each bind IMP; these read DEGK and NAGH. Histidine 41 functions as the Proton donor in the catalytic mechanism. Position 300 to 306 (300 to 306) interacts with substrate; sequence ATTGRPR. GTP contacts are provided by residues arginine 306, 332 to 334, and 414 to 416; these read KLD and SVG.

The protein belongs to the adenylosuccinate synthetase family. In terms of assembly, homodimer. Mg(2+) is required as a cofactor.

Its subcellular location is the cytoplasm. It carries out the reaction IMP + L-aspartate + GTP = N(6)-(1,2-dicarboxyethyl)-AMP + GDP + phosphate + 2 H(+). The protein operates within purine metabolism; AMP biosynthesis via de novo pathway; AMP from IMP: step 1/2. In terms of biological role, plays an important role in the de novo pathway of purine nucleotide biosynthesis. Catalyzes the first committed step in the biosynthesis of AMP from IMP. This is Adenylosuccinate synthetase from Anaeromyxobacter sp. (strain Fw109-5).